Reading from the N-terminus, the 1336-residue chain is Cytokinesis protein sepH (1336 aa).

Residues 1 to 10 (MVSRSSETSE) are compositionally biased toward low complexity. Positions 1 to 46 (MVSRSSETSEGPPPPSKIPGTPAKTRLSRLNSSPAKQDKPKDDRVV) are disordered. Basic and acidic residues predominate over residues 36-46 (KQDKPKDDRVV). The Protein kinase domain maps to 59 to 309 (YQLGDCLGKG…ARKLLKHPWI (251 aa)). ATP is bound by residues 65–73 (LGKGAFGSV) and lysine 88. Aspartate 181 functions as the Proton acceptor in the catalytic mechanism. A disordered region spans residues 368–402 (SRYTPTKDILPSPVSKHVTDRFRSPDSTEEDNWDD). The segment covering 384-393 (HVTDRFRSPD) has biased composition (basic and acidic residues). Residues 654–682 (AQLEEGLDEVDLEANIARDKYARLRGQVE) are a coiled coil. Over residues 1194 to 1205 (ERSESFSLEKRK) the composition is skewed to basic and acidic residues. Positions 1194-1336 (ERSESFSLEK…PTHADSDWAS (143 aa)) are disordered. Residues 1213 to 1236 (TSTTPPGYLANQSAPATPQINRFN) are compositionally biased toward polar residues. Composition is skewed to low complexity over residues 1253–1264 (PSLSSSALALRP) and 1272–1285 (PSLS…AGPS). The segment covering 1315 to 1327 (SRRRSILPQRRRP) has biased composition (basic residues).

This sequence belongs to the protein kinase superfamily. Ser/Thr protein kinase family. CDC7 subfamily. It depends on Mg(2+) as a cofactor.

It carries out the reaction L-seryl-[protein] + ATP = O-phospho-L-seryl-[protein] + ADP + H(+). It catalyses the reaction L-threonyl-[protein] + ATP = O-phospho-L-threonyl-[protein] + ADP + H(+). In terms of biological role, required for early events during cytokinesis including localization of cytoskeletal components to the cytokinetic ring. This chain is Cytokinesis protein sepH, found in Aspergillus niger (strain ATCC MYA-4892 / CBS 513.88 / FGSC A1513).